The sequence spans 100 residues: Urease subunit gamma (100 aa).

Belongs to the urease gamma subunit family. As to quaternary structure, heterotrimer of UreA (gamma), UreB (beta) and UreC (alpha) subunits. Three heterotrimers associate to form the active enzyme.

It localises to the cytoplasm. The enzyme catalyses urea + 2 H2O + H(+) = hydrogencarbonate + 2 NH4(+). It functions in the pathway nitrogen metabolism; urea degradation; CO(2) and NH(3) from urea (urease route): step 1/1. In Bordetella bronchiseptica (strain ATCC BAA-588 / NCTC 13252 / RB50) (Alcaligenes bronchisepticus), this protein is Urease subunit gamma.